The primary structure comprises 870 residues: Valine--tRNA ligase (870 aa).

Positions 42-52 match the 'HIGH' region motif; sequence PNVTGVLHIGH. The short motif at 527–531 is the 'KMSKS' region element; that stretch reads KMSKS. ATP is bound at residue Lys530. A coiled-coil region spans residues 800-870; it reads LENVDLSGIL…ISVELQNLRG (71 aa).

This sequence belongs to the class-I aminoacyl-tRNA synthetase family. ValS type 1 subfamily. In terms of assembly, monomer.

Its subcellular location is the cytoplasm. It catalyses the reaction tRNA(Val) + L-valine + ATP = L-valyl-tRNA(Val) + AMP + diphosphate. Catalyzes the attachment of valine to tRNA(Val). As ValRS can inadvertently accommodate and process structurally similar amino acids such as threonine, to avoid such errors, it has a 'posttransfer' editing activity that hydrolyzes mischarged Thr-tRNA(Val) in a tRNA-dependent manner. The protein is Valine--tRNA ligase of Campylobacter jejuni (strain RM1221).